The sequence spans 654 residues: MAPAIGIDLGTTYSCVGIFRDDRIEIIANDQGNRTTPSFVAFTDTERLIGDAAKNQVAMNPSNTVFDAKRLIGRKFADPEVQSDMKHFPFKVIDKAGKPVISVEFKGEEKQFTPEEISSMVLTKMRETAESYLGGTVNNAVVTVPAYFNDSQRQATKDAGLIAGLNVLRIINEPTAAAIAYGLDKKAEGERNVLIFDLGGGTFDVSLLTIEEGIFEVKSTAGDTHLGGEDFDNRLVNHFVNEFKRKHKKDLSSNARALRRLRTACERAKRTLSSAAQTSIEIDSLYEGIDFYTSITRARFEELCQDLFRSTMDPVERVLRDAKIDKSSVHEIVLVGGSTRIPRIQKLVSDFFNGKEPNKSINPDEAVAYGAAVQAAILSGDTTSKSTNEILLLDVAPLSVGIETAGGVMTPLIKRNTTIPTKKSETFSTFADNQPGVLIQVFEGERARTKDNNLLGKFELTGIPPAPRGVPQIEVTFDVDANGIMNVSALEKGTGKTNKIVITNDKGRLSKEEIERMLAEAEKYKAEDEAEASRISAKNGLESYAYSLRNTISDSKVDEKLDASDKEKLKTEIDKTVSWLDENQTATKEEFEAQQKELESVANPIMMKFYGAGGEGGAPGAGFPGAGGPGGFPGAGAGGAHSGGDDGPTVEEVD.

Residues 612 to 646 (AGGEGGAPGAGFPGAGGPGGFPGAGAGGAHSGGDD) show a composition bias toward gly residues. The tract at residues 612 to 654 (AGGEGGAPGAGFPGAGGPGGFPGAGAGGAHSGGDDGPTVEEVD) is disordered.

The protein belongs to the heat shock protein 70 family.

This Paracoccidioides lutzii (strain ATCC MYA-826 / Pb01) (Paracoccidioides brasiliensis) protein is Heat shock 70 kDa protein 2 (HSP70-2).